A 235-amino-acid polypeptide reads, in one-letter code: 1-Cys peroxiredoxin (235 aa).

The region spanning 5–179 (ILLGDKFPDF…ILRVVDSLQL (175 aa)) is the Thioredoxin domain. The active site involves Cys-49. Cys-49 acts as the Cysteine sulfenic acid (-SOH) intermediate in catalysis.

The protein belongs to the peroxiredoxin family. Prx6 subfamily.

The protein localises to the cytoplasm. It carries out the reaction a hydroperoxide + [protein]-dithiol = [protein]-disulfide + an alcohol + H2O. Its function is as follows. Thiol-specific peroxidase that catalyzes the reduction of hydrogen peroxide and organic hydroperoxides to water and alcohols, respectively. Plays a role in cell protection against oxidative stress by detoxifying peroxides. This Dirofilaria immitis (Canine heartworm) protein is 1-Cys peroxiredoxin.